Consider the following 29-residue polypeptide: Mycofactocin precursor peptide (29 aa).

It belongs to the mycofactocin precursor peptide family. In terms of processing, the post-translational modifications that lead to mycofactocin involve oxidative decarboxylation of the C-terminal tyrosine residue catalyzed by MftC, introduction of a tyramine-valine cross-link, removal of the modified C-terminal dipeptide by MftE. The released dipeptide then undergoes oxidative deamination by MftD, glycosylation by MftF and methylation by an unknown enzyme.

Its function is as follows. Precursor peptide that leads to mycofactocin (MFT) after extensive post-translational modifications by enzymes encoded by adjacent genes. Mycofactocin acts as a redox cofactor of nicotinamide-dependent oxidoreductases encoded in the same locus. This chain is Mycofactocin precursor peptide, found in Mycobacterium tuberculosis (strain ATCC 25618 / H37Rv).